The sequence spans 142 residues: MLKKDKSELTDIEYIVTQENGTEPPFMNEYWNHFDKGVYVDKISGKPLFTSEEKFHSECGWPSFSKALDDDEIIELVDKSFGMLRTEVRSEESNSHLGHVFNDGPKESGGLRYCINSAAIQFIPYEKLEELGYGDLISHFDK.

Residues 2-125 (LKKDKSELTD…NSAAIQFIPY (124 aa)) form the MsrB domain. Cys114 acts as the Nucleophile in catalysis.

Belongs to the MsrB Met sulfoxide reductase family.

It catalyses the reaction L-methionyl-[protein] + [thioredoxin]-disulfide + H2O = L-methionyl-(R)-S-oxide-[protein] + [thioredoxin]-dithiol. The sequence is that of Peptide methionine sulfoxide reductase MsrB from Staphylococcus aureus (strain bovine RF122 / ET3-1).